The following is a 210-amino-acid chain: SAP domain-containing ribonucleoprotein (210 aa).

The residue at position 2 (alanine 2) is an N-acetylalanine. One can recognise an SAP domain in the interval 8–42 (LHKLKLAELKQECLARGLETKGIKQDLINRLQAYL). N6-acetyllysine is present on lysine 10. Acidic residues predominate over residues 45-64 (HAEEEANEEDVLGDETEEEE). Residues 45–87 (HAEEEANEEDVLGDETEEEEPKPIELPVKEEEPPEKAVDMASE) are disordered. Residues 65 to 87 (PKPIELPVKEEEPPEKAVDMASE) show a composition bias toward basic and acidic residues. The residue at position 142 (lysine 142) is an N6-acetyllysine. Residues 162–210 (SSISRKSEDDEKLKKRKERFGIVTSSAGTGTTEDTEAKKRKRAERFGIA) form a disordered region. At serine 163 the chain carries Phosphoserine. Polar residues predominate over residues 184 to 193 (VTSSAGTGTT).

This sequence belongs to the SAP domain-containing ribonucleoprotein family. As to quaternary structure, interacts with DDX39A. Interacts with FUS. Interacts (via the C-terminal domain) with DDX39B; the interaction is direct and facilitates RNA binding of DDX39B. Component of the transcription/export (TREX) complex at least composed of ALYREF/THOC4, DDX39B, SARNP/CIP29, CHTOP and the THO subcomplex; TREX seems to have dynamic structure involving ATP-dependent remodeling; in the complex interacts directly with DDX39B in a ATP-dependent manner which bridges it to ALYREF/THOC4.

Its subcellular location is the nucleus. The protein resides in the nucleus speckle. Its function is as follows. Binds both single-stranded and double-stranded DNA with higher affinity for the single-stranded form. Specifically binds to scaffold/matrix attachment region DNA. Also binds single-stranded RNA. Enhances RNA unwinding activity of DDX39A. May participate in important transcriptional or translational control of cell growth, metabolism and carcinogenesis. Component of the TREX complex which is thought to couple mRNA transcription, processing and nuclear export, and specifically associates with spliced mRNA and not with unspliced pre-mRNA. The TREX complex is recruited to spliced mRNAs by a transcription-independent mechanism, binds to mRNA upstream of the exon-junction complex (EJC) and is recruited in a splicing- and cap-dependent manner to a region near the 5' end of the mRNA where it functions in mRNA export to the cytoplasm via the TAP/NXF1 pathway. Associates with DDX39B, which facilitates RNA binding of DDX39B and likely plays a role in mRNA export. In Mus musculus (Mouse), this protein is SAP domain-containing ribonucleoprotein (Sarnp).